A 297-amino-acid polypeptide reads, in one-letter code: Tyrosine recombinase XerC (297 aa).

A Core-binding (CB) domain is found at Met1–Lys83. The 188-residue stretch at Thr104–Asp291 folds into the Tyr recombinase domain. Residues Arg148, Lys172, His243, Arg246, and His269 contribute to the active site. The active-site O-(3'-phospho-DNA)-tyrosine intermediate is Tyr278.

Belongs to the 'phage' integrase family. XerC subfamily. In terms of assembly, forms a cyclic heterotetrameric complex composed of two molecules of XerC and two molecules of XerD.

It is found in the cytoplasm. Site-specific tyrosine recombinase, which acts by catalyzing the cutting and rejoining of the recombining DNA molecules. The XerC-XerD complex is essential to convert dimers of the bacterial chromosome into monomers to permit their segregation at cell division. It also contributes to the segregational stability of plasmids. This chain is Tyrosine recombinase XerC, found in Mycobacterium leprae (strain TN).